A 2603-amino-acid chain; its full sequence is Ankyrin repeat domain-containing protein 17 (2603 aa).

Methionine 1 carries the post-translational modification N-acetylmethionine. Over residues 1–32 the composition is skewed to low complexity; sequence MEKATVPAAAEGEGSPPAAAAVAAPPAAAAAE. The tract at residues 1–127 is disordered; sequence MEKATVPAAA…DDDEEEEVSE (127 aa). Phosphoserine occurs at positions 15 and 42. Basic residues predominate over residues 68 to 77; sequence PHHKAKRNRT. Residues 82 to 92 show a composition bias toward low complexity; sequence SSSESSSDSDN. The span at 93 to 107 shows a compositional bias: gly residues; that stretch reads SGGGGGGGGGGGGGT. A compositionally biased stretch (acidic residues) spans 112–127; it reads SEEEEDDDDEEEEVSE. Serine 152 bears the Phosphoserine mark. ANK repeat units follow at residues 229–258, 262–291, 296–325, 329–358, 362–391, 396–425, 429–458, 462–491, 495–524, 529–558, 559–588, 592–621, 625–654, 659–688, and 692–721; these read SDNRSLAEACSEGDVNAVRKLLIEGRSVNE, EGESLLCLACSAGYYELAQVLLAMHANVED, GDITPLMAAANGGHVKIVKLLLAHKADVNA, TGNTALTYACAGGYVDVVKVLLESGASIED, NGHTPLMEAGSAGHVEVARLLLENGAGINT, FKESALTLACYKGHLEMVRFLLEAGADQEH, EMHTALMEACMDGHVEVARLLLDSGAQVNM, SFESPLTLAACGGHVELAALLIERGASLEE, EGYTPLMEAAREGHEEMVALLLGQGANINA, TQETALTLACCGGFLEVADFLIKAGADIEL, GCSTPLMEAAQEGHLELVKYLLAAGANVHA, TGDTALTYACENGHTDVADVLLQAGADLEH, GGRTPLMKAARAGHVCTVQFLISKGANVNR, NDHTVLSLACAGGHLAVVELLLAHGADPTH, and DGSTMLIEAAKGGHTSVVCYLLDYPNNLLA. A Glycyl lysine isopeptide (Lys-Gly) (interchain with G-Cter in SUMO2) cross-link involves residue lysine 314. The segment at 770 to 792 is disordered; that stretch reads VRSKAASKQKSNSHLPANSQDVQ. The segment covering 775–792 has biased composition (polar residues); that stretch reads ASKQKSNSHLPANSQDVQ. Residue serine 799 is modified to Phosphoserine. ANK repeat units lie at residues 1078–1107, 1111–1140, 1145–1174, 1178–1207, 1213–1242, 1247–1276, 1280–1309, 1315–1344, 1348–1377, and 1381–1410; these read NHDTALTLACAGGHEELVQTLLERGASIEH, KGFTPLILAATAGHVGVVEILLDNGADIEA, TKDTPLSLACSGGRQEVVELLLARGANKEH, SDYTPLSLAASGGYVNIIKILLNAGAEINS, LGISPLMLAAMNGHTAAVKLLLDMGSDINA, NRNTALTLACFQGRTEVVSLLLDRKANVEH, TGLTPLMEAASGGYAEVGRVLLDKGADVNA, SRDTALTIAADKGHYKFCELLIGKGAHIDV, KGNTPLWLAANGGHLDVVQLLVQATADVDA, and RKITPLMAAFRKGHVKVVRYLVKEVNQFPS. Positions 1438–1522 form a coiled coil; that stretch reads VQAKDRQAAE…EKEKLKVEEE (85 aa). Serine 1453 carries the phosphoserine modification. Disordered regions lie at residues 1475 to 1496 and 1513 to 1713; these read AKREKRKEKRRKKKEEQRRKLE and EKEK…PKRE. The segment covering 1477 to 1487 has biased composition (basic residues); the sequence is REKRKEKRRKK. Low complexity-rich tracts occupy residues 1526–1546, 1598–1607, and 1616–1636; these read LTEPPSATTTTTIGISATWTT, ESKSSSTSES, and SSCSDESSNSNSSRKSNNHAS. Serine 1631 carries the post-translational modification Phosphoserine. Polar residues-rich tracts occupy residues 1638-1648 and 1671-1699; these read VVTTTMASKKQ and LSETVNEGTSNSLSTCTKSGPSPLSSPNG. A phosphoserine mark is found at serine 1692, serine 1696, and serine 1705. The region spanning 1721 to 1785 is the KH domain; that stretch reads RRSKKVSVPS…ESTRQATQLI (65 aa). At arginine 1870 the chain carries Asymmetric dimethylarginine. Disordered stretches follow at residues 1902-1991, 2007-2195, and 2269-2327; these read PRLP…PSVR, TTVT…SSSA, and VSSQ…YGSV. 2 stretches are compositionally biased toward low complexity: residues 1946–1989 and 2007–2024; these read SNQN…SSPS and TTVTTTASNNSTAPTNAT. Phosphoserine occurs at positions 2038, 2040, 2041, 2043, 2055, and 2063. Composition is skewed to low complexity over residues 2068-2077, 2087-2108, and 2175-2189; these read ASASEQEASS, RPPHSSSSSGSSSGHSTQQQPP, and PPSHATAAPHKTPAP. Residues 2269–2298 show a composition bias toward polar residues; that stretch reads VSSQSTPESMLSGKSSYLPNSDPLHQSDTS. The span at 2303–2313 shows a compositional bias: pro residues; the sequence is FRPPLQRPAPS. Serine 2373 carries the phosphoserine modification. The interval 2378 to 2447 is disordered; the sequence is LTPCSSASNE…TGTSAPSVIG (70 aa). A compositionally biased stretch (polar residues) spans 2379-2391; that stretch reads TPCSSASNESPAQ. A compositionally biased stretch (low complexity) spans 2392-2411; sequence SVSSGVRAPSPAPSSVPLGS. Serine 2401 is modified (phosphoserine). The segment covering 2435–2447 has biased composition (polar residues); that stretch reads IRQTGTSAPSVIG.

As to quaternary structure, interacts (via N-terminus) with NOD2. Interacts with CDK2, MCM3, MCM5, MCM7, CDC6 and PCNA. Interacts with MAVS and IFIH1. Interacts (via the second ankyrin repeat cluster) with RIGI. In terms of processing, phosphorylated by CDK2. Highly expressed in fetal liver. Detected in adult liver cells, ovarian oocytes, seminiferous tubules of the testes and pelvic region of the kidney. It was not detected in heart, gut, lung, spleen and skeletal muscle. Earliest specific in situ marker of hepatic differentiation during embryogenesis, useful for characterization of inductive events involved in hepatic specification.

It localises to the cytoplasm. Its subcellular location is the nucleus. Its function is as follows. Could play pivotal roles in cell cycle and DNA regulation. Involved in innate immune defense against viruse by positively regulating the viral dsRNA receptors RIGI and IFIH1 signaling pathways. Involves in NOD2- and NOD1-mediated responses to bacteria suggesting a role in innate antibacterial immune pathways too. Could play a central role for the formation and/or maintenance of the blood vessels of the circulation system. This Mus musculus (Mouse) protein is Ankyrin repeat domain-containing protein 17 (Ankrd17).